The sequence spans 382 residues: Processive diacylglycerol beta-glucosyltransferase (382 aa).

This sequence belongs to the glycosyltransferase 28 family. UgtP subfamily.

The protein resides in the cell membrane. It carries out the reaction a 1,2-diacyl-3-O-(beta-D-glucopyranosyl)-sn-glycerol + UDP-alpha-D-glucose = a 1,2-diacyl-3-O-(beta-D-Glc-(1-&gt;6)-beta-D-Glc)-sn-glycerol + UDP + H(+). The enzyme catalyses a 1,2-diacyl-3-O-(beta-D-Glc-(1-&gt;6)-beta-D-Glc)-sn-glycerol + UDP-alpha-D-glucose = a 1,2-diacyl-3-O-(beta-D-Glc-(1-&gt;6)-beta-D-Glc-(1-&gt;6)-beta-D-Glc)-sn-glycerol + UDP + H(+). It catalyses the reaction a 1,2-diacyl-sn-glycerol + UDP-alpha-D-glucose = a 1,2-diacyl-3-O-(beta-D-glucopyranosyl)-sn-glycerol + UDP + H(+). The protein operates within glycolipid metabolism; diglucosyl-diacylglycerol biosynthesis. In terms of biological role, processive glucosyltransferase involved in the biosynthesis of both the bilayer- and non-bilayer-forming membrane glucolipids. Is able to successively transfer up to three glucosyl residues to diacylglycerol (DAG), thereby catalyzing the formation of beta-monoglucosyl-DAG (3-O-(beta-D-glucopyranosyl)-1,2-diacyl-sn-glycerol), beta-diglucosyl-DAG (3-O-(beta-D-glucopyranosyl-beta-(1-&gt;6)-D-glucopyranosyl)-1,2-diacyl-sn-glycerol) and beta-triglucosyl-DAG (3-O-(beta-D-glucopyranosyl-beta-(1-&gt;6)-D-glucopyranosyl-beta-(1-&gt;6)-D-glucopyranosyl)-1,2-diacyl-sn-glycerol). Beta-diglucosyl-DAG is the predominant glycolipid found in Bacillales and is also used as a membrane anchor for lipoteichoic acid (LTA). Also seems to be able to form beta-tetraglucosyl-DAG, although this glycolipid has not been found in B.subtilis membrane. UgtP can only use UDP-glucose as sugar donor. In Bacillus subtilis (strain 168), this protein is Processive diacylglycerol beta-glucosyltransferase.